Consider the following 158-residue polypeptide: Small ribosomal subunit protein uS9 (158 aa).

It belongs to the universal ribosomal protein uS9 family.

This Brucella abortus (strain S19) protein is Small ribosomal subunit protein uS9.